The sequence spans 285 residues: Bifunctional protein FolD (285 aa).

NADP(+) is bound by residues 164-166, Ser-193, and Ile-234; that span reads GRS.

This sequence belongs to the tetrahydrofolate dehydrogenase/cyclohydrolase family. As to quaternary structure, homodimer.

The catalysed reaction is (6R)-5,10-methylene-5,6,7,8-tetrahydrofolate + NADP(+) = (6R)-5,10-methenyltetrahydrofolate + NADPH. It catalyses the reaction (6R)-5,10-methenyltetrahydrofolate + H2O = (6R)-10-formyltetrahydrofolate + H(+). The protein operates within one-carbon metabolism; tetrahydrofolate interconversion. In terms of biological role, catalyzes the oxidation of 5,10-methylenetetrahydrofolate to 5,10-methenyltetrahydrofolate and then the hydrolysis of 5,10-methenyltetrahydrofolate to 10-formyltetrahydrofolate. The sequence is that of Bifunctional protein FolD from Desulfovibrio desulfuricans (strain ATCC 27774 / DSM 6949 / MB).